We begin with the raw amino-acid sequence, 242 residues long: Triosephosphate isomerase (242 aa).

9-11 contacts substrate; that stretch reads NWK. The active-site Electrophile is the His-96. The active-site Proton acceptor is the Glu-165. Substrate contacts are provided by residues Gly-171, Ser-204, and 225–226; that span reads GG.

This sequence belongs to the triosephosphate isomerase family. Homodimer.

The protein localises to the cytoplasm. It catalyses the reaction D-glyceraldehyde 3-phosphate = dihydroxyacetone phosphate. It functions in the pathway carbohydrate biosynthesis; gluconeogenesis. The protein operates within carbohydrate degradation; glycolysis; D-glyceraldehyde 3-phosphate from glycerone phosphate: step 1/1. Involved in the gluconeogenesis. Catalyzes stereospecifically the conversion of dihydroxyacetone phosphate (DHAP) to D-glyceraldehyde-3-phosphate (G3P). The polypeptide is Triosephosphate isomerase (Synechocystis sp. (strain ATCC 27184 / PCC 6803 / Kazusa)).